Consider the following 396-residue polypeptide: Probable tRNA sulfurtransferase (396 aa).

The THUMP domain occupies 63 to 166 (AAAARASARV…GRRAYFFDTI (104 aa)). ATP-binding positions include 184–185 (LY), R266, G288, and Q297.

The protein belongs to the ThiI family.

The protein resides in the cytoplasm. It carries out the reaction [ThiI sulfur-carrier protein]-S-sulfanyl-L-cysteine + a uridine in tRNA + 2 reduced [2Fe-2S]-[ferredoxin] + ATP + H(+) = [ThiI sulfur-carrier protein]-L-cysteine + a 4-thiouridine in tRNA + 2 oxidized [2Fe-2S]-[ferredoxin] + AMP + diphosphate. The catalysed reaction is [ThiS sulfur-carrier protein]-C-terminal Gly-Gly-AMP + S-sulfanyl-L-cysteinyl-[cysteine desulfurase] + AH2 = [ThiS sulfur-carrier protein]-C-terminal-Gly-aminoethanethioate + L-cysteinyl-[cysteine desulfurase] + A + AMP + 2 H(+). The protein operates within cofactor biosynthesis; thiamine diphosphate biosynthesis. Catalyzes the ATP-dependent transfer of a sulfur to tRNA to produce 4-thiouridine in position 8 of tRNAs, which functions as a near-UV photosensor. Also catalyzes the transfer of sulfur to the sulfur carrier protein ThiS, forming ThiS-thiocarboxylate. This is a step in the synthesis of thiazole, in the thiamine biosynthesis pathway. The sulfur is donated as persulfide by IscS. This is Probable tRNA sulfurtransferase from Aeropyrum pernix (strain ATCC 700893 / DSM 11879 / JCM 9820 / NBRC 100138 / K1).